The sequence spans 446 residues: Histidine--tRNA ligase (446 aa).

The protein belongs to the class-II aminoacyl-tRNA synthetase family. In terms of assembly, homodimer.

The protein resides in the cytoplasm. The enzyme catalyses tRNA(His) + L-histidine + ATP = L-histidyl-tRNA(His) + AMP + diphosphate + H(+). In Paraburkholderia xenovorans (strain LB400), this protein is Histidine--tRNA ligase.